Consider the following 381-residue polypeptide: Sensor histidine kinase FlgS (381 aa).

Residues 177–381 form the Histidine kinase domain; sequence HLAHEIRNPV…TFEIKILNAS (205 aa). Histidine 180 carries the post-translational modification Phosphohistidine; by autocatalysis.

As to quaternary structure, interacts (via its C-terminal kinase domain) with FlhA (via N-terminus). In terms of processing, autophosphorylated.

The enzyme catalyses ATP + protein L-histidine = ADP + protein N-phospho-L-histidine.. In terms of biological role, member of the two-component regulatory system FlgR/FlgS that induces the transcriptional induction of the genes needed in motility and flagellar biogenesis. Also plays an essential role in bacterial survival at pH 2.5 independently of FlgR. Functions as a sensor protein kinase which is autophosphorylated at a histidine residue and transfers its phosphate group to the conserved aspartic acid residue in the regulatory domain of FlgR. In turn, FlgR functions as a transcriptional regulator initiating transcription from RpoN-dependent promoters. This is Sensor histidine kinase FlgS (flgS) from Helicobacter pylori (strain ATCC 700392 / 26695) (Campylobacter pylori).